Reading from the N-terminus, the 361-residue chain is Alanine racemase (361 aa).

Residue Lys35 is the Proton acceptor; specific for D-alanine of the active site. Lys35 carries the N6-(pyridoxal phosphate)lysine modification. Residue Arg130 participates in substrate binding. Tyr257 acts as the Proton acceptor; specific for L-alanine in catalysis. Met305 is a binding site for substrate.

It belongs to the alanine racemase family. It depends on pyridoxal 5'-phosphate as a cofactor.

It catalyses the reaction L-alanine = D-alanine. It participates in amino-acid biosynthesis; D-alanine biosynthesis; D-alanine from L-alanine: step 1/1. Its function is as follows. Catalyzes the interconversion of L-alanine and D-alanine. May also act on other amino acids. The sequence is that of Alanine racemase (alr) from Nitrosomonas eutropha (strain DSM 101675 / C91 / Nm57).